Consider the following 229-residue polypeptide: PKHD-type hydroxylase OCAR_6723/OCA5_c13470 (229 aa).

In terms of domain architecture, Fe2OG dioxygenase spans 78–180 (HIFPPLFNRY…RVASFFWLQS (103 aa)). Fe cation-binding residues include His98, Asp100, and His161. A 2-oxoglutarate-binding site is contributed by Arg171.

Fe(2+) is required as a cofactor. It depends on L-ascorbate as a cofactor.

This chain is PKHD-type hydroxylase OCAR_6723/OCA5_c13470, found in Afipia carboxidovorans (strain ATCC 49405 / DSM 1227 / KCTC 32145 / OM5) (Oligotropha carboxidovorans).